Consider the following 361-residue polypeptide: Phospho-N-acetylmuramoyl-pentapeptide-transferase (361 aa).

10 helical membrane passes run 25–45 (RAVL…PWVI), 73–93 (TMGG…WADL), 97–117 (YVWL…YDDW), 134–154 (MFWQ…TASL), 168–188 (VIYP…IVGT), 200–220 (GLAA…AYVA), 240–260 (VAVF…FNAY), 264–284 (VFMG…VAVI), 289–309 (IVLF…MIQV), and 338–358 (QVVV…LSTL).

This sequence belongs to the glycosyltransferase 4 family. MraY subfamily. Requires Mg(2+) as cofactor.

The protein localises to the cell inner membrane. It catalyses the reaction UDP-N-acetyl-alpha-D-muramoyl-L-alanyl-gamma-D-glutamyl-meso-2,6-diaminopimeloyl-D-alanyl-D-alanine + di-trans,octa-cis-undecaprenyl phosphate = di-trans,octa-cis-undecaprenyl diphospho-N-acetyl-alpha-D-muramoyl-L-alanyl-D-glutamyl-meso-2,6-diaminopimeloyl-D-alanyl-D-alanine + UMP. The protein operates within cell wall biogenesis; peptidoglycan biosynthesis. Its function is as follows. Catalyzes the initial step of the lipid cycle reactions in the biosynthesis of the cell wall peptidoglycan: transfers peptidoglycan precursor phospho-MurNAc-pentapeptide from UDP-MurNAc-pentapeptide onto the lipid carrier undecaprenyl phosphate, yielding undecaprenyl-pyrophosphoryl-MurNAc-pentapeptide, known as lipid I. The polypeptide is Phospho-N-acetylmuramoyl-pentapeptide-transferase (Laribacter hongkongensis (strain HLHK9)).